We begin with the raw amino-acid sequence, 212 residues long: Nucleoside diphosphate kinase homolog 5 (212 aa).

An NDK region spans residues 13–145 (EKTLAIIKPD…EREIRFMFPE (133 aa)).

This sequence belongs to the NDK family. As to quaternary structure, component of the axonemal radial spoke complex 1 (RS1), at least composed of spoke head proteins RSPH1, RSPH3, RSPH9 and the cilia-specific component RSPH4A or sperm-specific component RSPH6A, spoke stalk proteins RSPH14, DNAJB13, DYDC1, ROPN1L and NME5, and the anchor protein IQUB. Interacts with IQUB. As to expression, specifically expressed in testis germinal cells.

The protein resides in the cell projection. The protein localises to the cilium. Its subcellular location is the cytoplasm. It localises to the cytoskeleton. It is found in the flagellum axoneme. Its function is as follows. Functions as part of axonemal radial spoke complexes that play an important part in the motility of sperm and cilia. Does not seem to have nucleoside diphosphate kinase (NDPK) activity. Confers protection from cell death by BAX and alters the cellular levels of several antioxidant enzymes including GPX5. May play a role in spermiogenesis by increasing the ability of late-stage spermatids to eliminate reactive oxygen species. Exhibits a 3'-5' exonuclease activity with a preference for single-stranded DNA, suggesting roles in DNA proofreading and repair. The polypeptide is Nucleoside diphosphate kinase homolog 5 (Homo sapiens (Human)).